Reading from the N-terminus, the 218-residue chain is UPF0301 protein RPB_4502 (218 aa).

The disordered stretch occupies residues 1 to 26 (MVTKSKRPKSGDRSGREPGNAGPIEQ).

It belongs to the UPF0301 (AlgH) family.

This is UPF0301 protein RPB_4502 from Rhodopseudomonas palustris (strain HaA2).